Consider the following 680-residue polypeptide: Potassium-transporting ATPase ATP-binding subunit (680 aa).

4 helical membrane-spanning segments follow: residues 37–57, 69–89, 223–243, and 257–277; these read VIFV…LDVA, IAAW…VAEG, ILLS…WGLA, and ALLV…IGIA. D307 acts as the 4-aspartylphosphate intermediate in catalysis. ATP-binding positions include D344, E348, 375 to 382, and K393; that span reads FTAETRLS. Mg(2+) contacts are provided by D516 and D520. Transmembrane regions (helical) follow at residues 586–606, 614–634, and 652–672; these read FAII…LNIM, AILS…PLAL, and LLVY…LIDL.

Belongs to the cation transport ATPase (P-type) (TC 3.A.3) family. Type IA subfamily. As to quaternary structure, the system is composed of three essential subunits: KdpA, KdpB and KdpC.

The protein localises to the cell inner membrane. It carries out the reaction K(+)(out) + ATP + H2O = K(+)(in) + ADP + phosphate + H(+). In terms of biological role, part of the high-affinity ATP-driven potassium transport (or Kdp) system, which catalyzes the hydrolysis of ATP coupled with the electrogenic transport of potassium into the cytoplasm. This subunit is responsible for energy coupling to the transport system and for the release of the potassium ions to the cytoplasm. The sequence is that of Potassium-transporting ATPase ATP-binding subunit from Rhizobium meliloti (strain 1021) (Ensifer meliloti).